Here is a 277-residue protein sequence, read N- to C-terminus: Ribonuclease HII (277 aa).

The region spanning 20-250 is the RNase H type-2 domain; sequence KLIIGLDEAG…SKKLLKKIED (231 aa). Positions 26, 27, and 141 each coordinate a divalent metal cation.

The protein belongs to the RNase HII family. The cofactor is Mn(2+). Requires Mg(2+) as cofactor.

It is found in the cytoplasm. The enzyme catalyses Endonucleolytic cleavage to 5'-phosphomonoester.. Endonuclease that specifically degrades the RNA of RNA-DNA hybrids. The polypeptide is Ribonuclease HII (Methanococcus aeolicus (strain ATCC BAA-1280 / DSM 17508 / OCM 812 / Nankai-3)).